Reading from the N-terminus, the 240-residue chain is Methylthioribulose-1-phosphate dehydratase (240 aa).

Residue Cys99 participates in substrate binding. Zn(2+) is bound by residues His116 and His118. The active-site Proton donor/acceptor is Glu145. A Zn(2+)-binding site is contributed by His201.

Belongs to the aldolase class II family. MtnB subfamily. Requires Zn(2+) as cofactor.

Its subcellular location is the cytoplasm. The enzyme catalyses 5-(methylsulfanyl)-D-ribulose 1-phosphate = 5-methylsulfanyl-2,3-dioxopentyl phosphate + H2O. It participates in amino-acid biosynthesis; L-methionine biosynthesis via salvage pathway; L-methionine from S-methyl-5-thio-alpha-D-ribose 1-phosphate: step 2/6. Functionally, catalyzes the dehydration of methylthioribulose-1-phosphate (MTRu-1-P) into 2,3-diketo-5-methylthiopentyl-1-phosphate (DK-MTP-1-P). This is Methylthioribulose-1-phosphate dehydratase from Paracoccidioides lutzii (strain ATCC MYA-826 / Pb01) (Paracoccidioides brasiliensis).